The following is a 168-amino-acid chain: NADH dehydrogenase [ubiquinone] 1 alpha subcomplex assembly factor 2 (168 aa).

Positions 112–168 are disordered; the sequence is GKETSEELLPSPTATQVKGHASAPYFGREEPSVAPTSTGKTFQPGSWTPEDGKRQSQ. S133 carries the post-translational modification Phosphoserine. Over residues 145–157 the composition is skewed to polar residues; sequence APTSTGKTFQPGS.

It belongs to the complex I NDUFA12 subunit family. In terms of assembly, interacts with ARMC9.

The protein resides in the mitochondrion. Acts as a molecular chaperone for mitochondrial complex I assembly. Complex I functions in the transfer of electrons from NADH to the respiratory chain. The immediate electron acceptor for the enzyme is believed to be ubiquinone. Is involved in the initial steps of cilia formation, including removal of CP110 from the mother centrioles, docking of membrane vesicles to the mother centrioles, and establishment of the transition zone. The chain is NADH dehydrogenase [ubiquinone] 1 alpha subcomplex assembly factor 2 (Ndufaf2) from Mus musculus (Mouse).